A 363-amino-acid chain; its full sequence is Chorismate synthase (363 aa).

The disordered stretch occupies residues 44–63 (DLDRRKPGTSRHTTQRQEPD). Residues arginine 48 and arginine 54 each coordinate NADP(+). FMN-binding positions include 125-127 (RSS), 237-238 (NA), glycine 277, 292-296 (KPTSS), and arginine 318.

Belongs to the chorismate synthase family. Homotetramer. The cofactor is FMNH2.

It catalyses the reaction 5-O-(1-carboxyvinyl)-3-phosphoshikimate = chorismate + phosphate. Its pathway is metabolic intermediate biosynthesis; chorismate biosynthesis; chorismate from D-erythrose 4-phosphate and phosphoenolpyruvate: step 7/7. Its function is as follows. Catalyzes the anti-1,4-elimination of the C-3 phosphate and the C-6 proR hydrogen from 5-enolpyruvylshikimate-3-phosphate (EPSP) to yield chorismate, which is the branch point compound that serves as the starting substrate for the three terminal pathways of aromatic amino acid biosynthesis. This reaction introduces a second double bond into the aromatic ring system. This is Chorismate synthase from Pseudomonas fluorescens (strain ATCC BAA-477 / NRRL B-23932 / Pf-5).